The following is a 354-amino-acid chain: Phospho-N-acetylmuramoyl-pentapeptide-transferase (354 aa).

The next 10 helical transmembrane spans lie at 16–36 (YITV…LYLM), 66–86 (TPTM…LLTV), 88–108 (IHNP…AIGV), 130–150 (FFLQ…YAHL), 168–188 (IFGI…VNLT), 193–213 (GLAT…TYIT), 227–247 (IIGV…LIGF), 257–277 (VFMG…MAII), 282–302 (VLLI…IIQV), and 331–351 (KIIV…LITL).

This sequence belongs to the glycosyltransferase 4 family. MraY subfamily. Requires Mg(2+) as cofactor.

It is found in the cell inner membrane. The enzyme catalyses UDP-N-acetyl-alpha-D-muramoyl-L-alanyl-gamma-D-glutamyl-meso-2,6-diaminopimeloyl-D-alanyl-D-alanine + di-trans,octa-cis-undecaprenyl phosphate = di-trans,octa-cis-undecaprenyl diphospho-N-acetyl-alpha-D-muramoyl-L-alanyl-D-glutamyl-meso-2,6-diaminopimeloyl-D-alanyl-D-alanine + UMP. Its pathway is cell wall biogenesis; peptidoglycan biosynthesis. Catalyzes the initial step of the lipid cycle reactions in the biosynthesis of the cell wall peptidoglycan: transfers peptidoglycan precursor phospho-MurNAc-pentapeptide from UDP-MurNAc-pentapeptide onto the lipid carrier undecaprenyl phosphate, yielding undecaprenyl-pyrophosphoryl-MurNAc-pentapeptide, known as lipid I. This is Phospho-N-acetylmuramoyl-pentapeptide-transferase from Nitratiruptor sp. (strain SB155-2).